The primary structure comprises 151 residues: Probable cGMP 3',5'-cyclic phosphodiesterase subunit delta (151 aa).

The protein belongs to the PDE6D/unc-119 family. In terms of assembly, interacts with Pde6.

The protein localises to the nucleus. Its subcellular location is the cytoplasm. This is Probable cGMP 3',5'-cyclic phosphodiesterase subunit delta from Drosophila erecta (Fruit fly).